The primary structure comprises 494 residues: DnaJ homolog subfamily C member 7 (494 aa).

Ala2 carries the post-translational modification N-acetylalanine. TPR repeat units lie at residues 28–61, 62–95, 96–129, 142–175, 210–243, 256–289, 294–327, and 328–361; these read AESF…CPNN, ASYY…DDSF, VRGH…DHKN, VMEY…APAC, ADAL…APDH, LKAK…DPNN, AKLY…DDTY, and IKAY…EKTK. One can recognise a J domain in the interval 381–451; sequence DYYKILGVDK…KKKTRYDSGQ (71 aa). Phosphoserine is present on Ser393.

As to quaternary structure, associates with complexes containing chaperones HSP70 and HSP90. Interacts with the GAP domain of NF1. Interacts with HSP90AA1. Interacts with HSPA1A/B; the interaction is enhanced by ATP. Interacts with HSP90AB1. Interacts with PGR. Interacts with RAD9A; the interaction is interrupted by UV and heat shock treatments. Interacts with HUS1 and RAD1. Interacts with NR1I3; this complex may also include HSP90 Interacts with HSPA8. Widely expressed with high levels in liver, skeletal muscle, kidney and testis.

The protein resides in the cytoplasm. The protein localises to the nucleus. It is found in the cytoskeleton. In terms of biological role, acts as a co-chaperone regulating the molecular chaperones HSP70 and HSP90 in folding of steroid receptors, such as the glucocorticoid receptor and the progesterone receptor. Proposed to act as a recycling chaperone by facilitating the return of chaperone substrates to early stages of chaperoning if further folding is required. In vitro, induces ATP-independent dissociation of HSP90 but not of HSP70 from the chaperone-substrate complexes. Recruits NR1I3 to the cytoplasm. The sequence is that of DnaJ homolog subfamily C member 7 (Dnajc7) from Mus musculus (Mouse).